A 1483-amino-acid polypeptide reads, in one-letter code: Heme-responsive zinc finger transcription factor HAP1 (1483 aa).

A compositionally biased stretch (polar residues) spans 1 to 50; that stretch reads MSNTPYNSSVPSIASMTQSSVSRSPNMHTATTPGANTSSNSPPLHMSSDS. The interval 1–56 is disordered; that stretch reads MSNTPYNSSVPSIASMTQSSVSRSPNMHTATTPGANTSSNSPPLHMSSDSSKIKRK. Positions 64, 67, 74, 81, 84, and 93 each coordinate Zn(2+). Positions 64 to 93 form a DNA-binding region, zn(2)-C6 fungal-type; it reads CTICRKRKVKCDKLRPHCQQCTKTGVAHLC. Positions 105–134 form a coiled coil; sequence EKELLKDNELKKLRERVKSLEKTLSKVHSS. The segment at 126–208 is disordered; sequence KTLSKVHSSP…ANSSSLSISN (83 aa). A compositionally biased stretch (low complexity) spans 130–142; sequence KVHSSPSSNSLKS. 2 stretches are compositionally biased toward polar residues: residues 143 to 152 and 160 to 176; these read YNTPESSNLF and TLVNANTGSASSASHMH. Positions 177–208 are enriched in low complexity; that stretch reads QQQQQQQQQEQQQDFSRSANANANSSSLSISN. The heme-responsive; required for HMC formation stretch occupies residues 244–444; it reads KGDPYLKLLW…NTIPHHQPQS (201 aa). HRM repeat units lie at residues 280–285, 299–304, 323–328, 347–352, 389–394, and 415–420; these read KCPINH, KCPVDH, RCPVDH, and RCPIDH. Polar residues-rich tracts occupy residues 432 to 447 and 706 to 734; these read STHNTIPHHQPQSGSH and QLNATIPATSQDVSNNGSKKANPSTNPTL. Disordered stretches follow at residues 432-458 and 706-767; these read STHNTIPHHQPQSGSHARSHPAQSRKH and QLNA…KENQ. The segment covering 735-759 has biased composition (low complexity); that stretch reads NNNMSAATTNSSSRSGSADSRSGSN. Residues 1192–1197 form an HRM 7 repeat; that stretch reads KCPVYQ. The tract at residues 1384–1411 is disordered; the sequence is TANTDTSANGSALSTLTSPQGSDLASNS. Polar residues predominate over residues 1388-1411; sequence DTSANGSALSTLTSPQGSDLASNS.

As to quaternary structure, binds DNA as a homodimer. Interacts with SRO9 and YDJ1. In the absence of heme, binds to at least four cellular proteins, including YDJ1 and SRO9, forming a high-molecular-weight complex (HMC) which results in repression of its activity and dictates its DNA-binding specificity.

It localises to the nucleus. Functionally, regulation of oxygen dependent gene expression. It modulates the expression of Iso-1 (CYP1) and Iso-2 (CYP3) cytochrome c. In response to heme, promotes transcription of genes encoding functions required for respiration, controlling oxidative damage and repression of anaerobic genes. Binds to the sequence 5'-CGGNNNTNNCGG-3'. Is non-functional in terms of iso-1 cytochrome c expression in strain S288c and its derivatives. This Saccharomyces cerevisiae (Baker's yeast) protein is Heme-responsive zinc finger transcription factor HAP1 (HAP1).